The sequence spans 419 residues: Transcription termination factor Rho (419 aa).

One can recognise a Rho RNA-BD domain in the interval 48–123 (EISGDGVLEI…LKVDTINFDR (76 aa)). RNA-binding stretches follow at residues 61-66 (GFGFLR), 78-80 (DIY), and 108-110 (ERY). ATP contacts are provided by residues 169–174 (GKGQRG), 181–186 (KAGKTI), and R212. Residues 284-288 (VLTGG) are RNA-binding 2.

It belongs to the Rho family. Homohexamer. The homohexamer assembles into an open ring structure.

In terms of biological role, facilitates transcription termination by a mechanism that involves Rho binding to the nascent RNA, activation of Rho's RNA-dependent ATPase activity, and release of the mRNA from the DNA template. The sequence is that of Transcription termination factor Rho from Pseudomonas fluorescens biotype C.